Consider the following 401-residue polypeptide: Alkane 1-monooxygenase (401 aa).

The Cytoplasmic segment spans residues 1–20 (MLEKHRVLDSAPEYVDKKKY). The chain crosses the membrane as a helical span at residues 21 to 39 (LWILSTLWPATPMIGIWLA). Topologically, residues 40–41 (NE) are periplasmic. The chain crosses the membrane as a helical span at residues 42–62 (TGWGIFYGLVLLVWYGALPLL). The Cytoplasmic segment spans residues 63 to 88 (DAMFGEDFNNPPEEVVPKLEKERYYR). Residues 89-111 (VLTYLTVPMHYAALIVSAWWVGT) traverse the membrane as a helical segment. Residues 112–113 (QP) are Periplasmic-facing. A helical membrane pass occupies residues 114 to 134 (MSWLEIGALALSLGIVNGLAL). Residues 135-228 (NTGHELGHKK…QSVWSFDNEI (94 aa)) lie on the Cytoplasmic side of the membrane. Positions 138, 142, 168, 172, and 173 each coordinate Fe cation. A helical transmembrane segment spans residues 229–249 (LQPMIITVILYAVLLALFGPK). Residue M250 is a topological domain, periplasmic. A helical transmembrane segment spans residues 251–270 (LVFLPIQMAFGWWQLTSANY). The Cytoplasmic segment spans residues 271–401 (IEHYGLLRQK…HSSSTSAVAS (131 aa)). Residues H312, H315, and H316 each contribute to the Fe cation site.

Belongs to the fatty acid desaturase type 1 family. AlkB subfamily. The cofactor is Fe(3+).

The protein localises to the cell inner membrane. The enzyme catalyses octane + 2 reduced [rubredoxin] + O2 + 2 H(+) = 2 oxidized [rubredoxin] + octan-1-ol + H2O. Its pathway is hydrocarbon metabolism; alkane degradation. Its function is as follows. Catalyzes the hydroxylation of n-alkanes and fatty acids in the presence of a NADH-rubredoxin reductase and rubredoxin. The chain is Alkane 1-monooxygenase (alkB) from Ectopseudomonas oleovorans (Pseudomonas oleovorans).